The following is a 164-amino-acid chain: Putative ankyrin repeat protein RBE_0585 (164 aa).

ANK repeat units lie at residues 42–107 and 126–149; these read NQDT…VAIL and DKDT…MLDY.

In Rickettsia bellii (strain RML369-C), this protein is Putative ankyrin repeat protein RBE_0585.